We begin with the raw amino-acid sequence, 352 residues long: Pheromone-regulated membrane protein 6 (352 aa).

The Extracellular segment spans residues 1–36 (MESSLQKLKFQDIDINLIPTAKWTTKLQYILYTWCQ). The chain crosses the membrane as a helical span at residues 37–57 (SILHVAMFFSDIYTCIKLLAF). Over 58-76 (NTWSNNIIQPFLEFRISKW) the chain is Cytoplasmic. A helical membrane pass occupies residues 77 to 97 (LFSGCILCSSLILIWELVIGL). Over 98 to 227 (RVYRKKEITS…VILSFMLFSF (130 aa)) the chain is Extracellular. A helical membrane pass occupies residues 228-248 (IIWVILISKLILSIIIFIIFI). The Cytoplasmic portion of the chain corresponds to 249 to 352 (RPRFLSSKRK…FPQKYKHKYI (104 aa)).

It belongs to the KCH1 low affinity K(+) transporter family.

It is found in the cell membrane. The protein localises to the bud tip. It localises to the vacuole lumen. It carries out the reaction K(+)(in) = K(+)(out). Its function is as follows. Low affinity potassium transporter that, with KCH1, participates in high-affinity Ca(2+) influx system (HACS) activation during the response to mating pheromone. Directly promotes K(+) influx and HACS may electrochemically respond to this K(+) influx. KCH1 and PRM6/KCH2 act at the apex of the calcium signaling pathway that is used for survival during prolonged exposures to mating pheromones. The sequence is that of Pheromone-regulated membrane protein 6 from Saccharomyces cerevisiae (strain ATCC 204508 / S288c) (Baker's yeast).